Here is a 578-residue protein sequence, read N- to C-terminus: Maltogenic alpha-amylase (578 aa).

Belongs to the glycosyl hydrolase 13 family.

It catalyses the reaction hydrolysis of (1-&gt;4)-alpha-D-glucosidic linkages in polysaccharides so as to remove successive alpha-maltose residues from the non-reducing ends of the chains.. In terms of biological role, converts starch into maltose. In contrary to other maltogenic alpha-amylases BlmA cannot hydrolyze 1,4-alpha-glucosidic linkage next to 1,6-alpha-glucosidic linkages. In Bacillus licheniformis, this protein is Maltogenic alpha-amylase (blmA).